The sequence spans 533 residues: MPMTMSQAFIGNFLGNSPKWYKIAILSFLIINPILFFYVSPFVAGWVLVLEFIFTLAMALKCYPLQPGGLLAIEAVAIGMTSASQVLHEIEANLEVLLLLVFMVAGIYFMKQLLLFAFTKMITKVRSKILVSLLFCLASAFLSAFLDALTVIAVIITVAVGFYSIYHKVASGKDFSADHDHTSENKNEEGEDQLNEAELESFRGFLRNLLMHAGVGTALGGVCTMVGEPQNLIIAAQANWQFGEFAIRMSPVTVPVFIAGILTCYIVEKFRIFGYGAQLPDAVHKILCDYDAHEDARRTNKDKMKLIVQAFIGVWLIAGLALHLASVGLIGLSVIILATAFNGITDEHALGKAFEEALPFTALLAVFFSVVAVIIDQQLFAPVIQWALNHEGNTQLVIFYIANGLLSMVSDNVFVGTVYINEVKAALLNGQITRDQFDLLAVAINTGTNLPSVATPNGQAAFLFLLTSALAPLIRLSYGRMVWMALPYTIVLSIVGVMAIQIGFLEQMTQYFYDSHAILHHSVKEALAPATGH.

Transmembrane regions (helical) follow at residues 10–30, 67–87, 96–116, 131–165, 209–229, 247–267, 310–330, 355–375, 396–416, 454–474, and 485–505; these read IGNFLGNSPKWYKIAILSFLI, PGGLLAIEAVAIGMTSASQVL, VLLLLVFMVAGIYFMKQLLLF, VSLLFCLASAFLSAFLDALTVIAVIITVAVGFYSI, LLMHAGVGTALGGVCTMVGEP, IRMSPVTVPVFIAGILTCYIV, AFIGVWLIAGLALHLASVGLI, EEALPFTALLAVFFSVVAVII, LVIFYIANGLLSMVSDNVFVG, ATPNGQAAFLFLLTSALAPLI, and ALPYTIVLSIVGVMAIQIGFL.

This sequence belongs to the NhaB Na(+)/H(+) (TC 2.A.34) antiporter family.

The protein resides in the cell inner membrane. It catalyses the reaction 2 Na(+)(in) + 3 H(+)(out) = 2 Na(+)(out) + 3 H(+)(in). In terms of biological role, na(+)/H(+) antiporter that extrudes sodium in exchange for external protons. The polypeptide is Na(+)/H(+) antiporter NhaB (Shewanella oneidensis (strain ATCC 700550 / JCM 31522 / CIP 106686 / LMG 19005 / NCIMB 14063 / MR-1)).